Consider the following 120-residue polypeptide: Photosystem II extrinsic protein U (120 aa).

Positions 1 to 29 (MKRLLSLLTGVLVMTGLLMALIFPQSAYA) are cleaved as a signal peptide.

It belongs to the PsbU family. As to quaternary structure, PSII is composed of 1 copy each of membrane proteins PsbA, PsbB, PsbC, PsbD, PsbE, PsbF, PsbH, PsbI, PsbJ, PsbK, PsbL, PsbM, PsbT, PsbX, PsbY, Psb30/Ycf12, peripheral proteins PsbO, CyanoQ (PsbQ), PsbU, PsbV and a large number of cofactors. It forms dimeric complexes.

The protein localises to the cellular thylakoid membrane. One of the extrinsic, lumenal subunits of photosystem II (PSII). PSII is a light-driven water plastoquinone oxidoreductase, using light energy to abstract electrons from H(2)O, generating a proton gradient subsequently used for ATP formation. The extrinsic proteins stabilize the structure of photosystem II oxygen-evolving complex (OEC), the ion environment of oxygen evolution and protect the OEC against heat-induced inactivation. The polypeptide is Photosystem II extrinsic protein U (Prochlorococcus marinus (strain MIT 9313)).